Reading from the N-terminus, the 222-residue chain is Small ribosomal subunit protein uS3 (222 aa).

The region spanning I38 to K106 is the KH type-2 domain.

It belongs to the universal ribosomal protein uS3 family. As to quaternary structure, part of the 30S ribosomal subunit. Forms a tight complex with proteins S10 and S14.

Its function is as follows. Binds the lower part of the 30S subunit head. Binds mRNA in the 70S ribosome, positioning it for translation. The chain is Small ribosomal subunit protein uS3 from Lactobacillus johnsonii (strain CNCM I-12250 / La1 / NCC 533).